The primary structure comprises 162 residues: Ubiquitin-fold modifier-conjugating enzyme 1 (162 aa).

The active-site Glycyl thioester intermediate is Cys-115.

The protein belongs to the ubiquitin-conjugating enzyme family. UFC1 subfamily. As to quaternary structure, interacts with uba-5.

Functionally, E2-like enzyme which forms an intermediate with ufm-1. The intermediate is formed via a thioester linkage. This chain is Ubiquitin-fold modifier-conjugating enzyme 1, found in Caenorhabditis briggsae.